A 231-amino-acid polypeptide reads, in one-letter code: Cytochrome c oxidase subunit 2 (231 aa).

The Mitochondrial intermembrane segment spans residues Met-1–Ser-30. A helical membrane pass occupies residues Leu-31 to Tyr-52. Over Phe-53 to Ile-69 the chain is Mitochondrial matrix. The chain crosses the membrane as a helical span at residues Phe-70–Tyr-89. The Mitochondrial intermembrane portion of the chain corresponds to Gly-90–Glu-231. Cu cation contacts are provided by His-164, Cys-199, Glu-201, Cys-203, His-207, and Met-210. A Mg(2+)-binding site is contributed by Glu-201.

The protein belongs to the cytochrome c oxidase subunit 2 family. As to quaternary structure, component of the cytochrome c oxidase (complex IV, CIV), a multisubunit enzyme composed of a catalytic core of 3 subunits and several supernumerary subunits. The complex exists as a monomer or a dimer and forms supercomplexes (SCs) in the inner mitochondrial membrane with ubiquinol-cytochrome c oxidoreductase (cytochrome b-c1 complex, complex III, CIII). Requires Cu cation as cofactor.

Its subcellular location is the mitochondrion inner membrane. It carries out the reaction 4 Fe(II)-[cytochrome c] + O2 + 8 H(+)(in) = 4 Fe(III)-[cytochrome c] + 2 H2O + 4 H(+)(out). Its function is as follows. Component of the cytochrome c oxidase, the last enzyme in the mitochondrial electron transport chain which drives oxidative phosphorylation. The respiratory chain contains 3 multisubunit complexes succinate dehydrogenase (complex II, CII), ubiquinol-cytochrome c oxidoreductase (cytochrome b-c1 complex, complex III, CIII) and cytochrome c oxidase (complex IV, CIV), that cooperate to transfer electrons derived from NADH and succinate to molecular oxygen, creating an electrochemical gradient over the inner membrane that drives transmembrane transport and the ATP synthase. Cytochrome c oxidase is the component of the respiratory chain that catalyzes the reduction of oxygen to water. Electrons originating from reduced cytochrome c in the intermembrane space (IMS) are transferred via the dinuclear copper A center (CU(A)) of subunit 2 and heme A of subunit 1 to the active site in subunit 1, a binuclear center (BNC) formed by heme A3 and copper B (CU(B)). The BNC reduces molecular oxygen to 2 water molecules using 4 electrons from cytochrome c in the IMS and 4 protons from the mitochondrial matrix. The protein is Cytochrome c oxidase subunit 2 of Caenorhabditis elegans.